The chain runs to 815 residues: (E)-gamma-bisabolene synthase (815 aa).

The Mg(2+) site is built by D561, D565, D709, and E717. The short motif at 561-565 (DDMYD) is the DDXXD motif element.

This sequence belongs to the terpene synthase family. Tpsd subfamily. It depends on Mg(2+) as a cofactor. Mn(2+) is required as a cofactor.

It localises to the cytoplasm. The catalysed reaction is (2E,6E)-farnesyl diphosphate = (E)-gamma-bisabolene + diphosphate. Its pathway is terpene metabolism; oleoresin biosynthesis. In terms of biological role, involved in defensive oleoresin formation in conifers in response to insect attack or other injury. Involved in sesquiterpene (C15) olefins biosynthesis. Produces mainly (E)-gamma-bisabolene when used with farnesyl diphosphate as substrate. No activity with geranyl diphosphate or geranylgeranyl diphosphate. This Pseudotsuga menziesii (Douglas-fir) protein is (E)-gamma-bisabolene synthase (TPS3).